A 341-amino-acid polypeptide reads, in one-letter code: Anthranilate phosphoribosyltransferase (341 aa).

5-phospho-alpha-D-ribose 1-diphosphate-binding positions include glycine 80, 83–84 (GD), threonine 88, 90–93 (NIST), 108–116 (KHGNRAVSS), and serine 120. Position 80 (glycine 80) interacts with anthranilate. Position 92 (serine 92) interacts with Mg(2+). Asparagine 111 provides a ligand contact to anthranilate. Position 166 (arginine 166) interacts with anthranilate. Residues aspartate 225 and glutamate 226 each coordinate Mg(2+).

It belongs to the anthranilate phosphoribosyltransferase family. As to quaternary structure, homodimer. The cofactor is Mg(2+).

The catalysed reaction is N-(5-phospho-beta-D-ribosyl)anthranilate + diphosphate = 5-phospho-alpha-D-ribose 1-diphosphate + anthranilate. It participates in amino-acid biosynthesis; L-tryptophan biosynthesis; L-tryptophan from chorismate: step 2/5. Its function is as follows. Catalyzes the transfer of the phosphoribosyl group of 5-phosphorylribose-1-pyrophosphate (PRPP) to anthranilate to yield N-(5'-phosphoribosyl)-anthranilate (PRA). The chain is Anthranilate phosphoribosyltransferase from Brevibacillus brevis (strain 47 / JCM 6285 / NBRC 100599).